Reading from the N-terminus, the 369-residue chain is Secondary metabolism regulator laeA (369 aa).

The tract at residues 1 to 37 (MFGNGQTGQRLPAMASPPHDSYYSQSLASSRSRNNSD) is disordered. Residues 20-37 (DSYYSQSLASSRSRNNSD) show a composition bias toward low complexity.

The protein belongs to the methyltransferase superfamily. LaeA methyltransferase family. As to quaternary structure, component of the heterotrimeric velvet complex composed of laeA, veA and velB; VeA acting as a bridging protein between laeA and velB. Interacts directly with veA.

Its subcellular location is the nucleus. The catalysed reaction is L-methionyl-[protein] + S-adenosyl-L-methionine = S-methyl-L-methionyl-[protein] + S-adenosyl-L-homocysteine. Its function is as follows. Methyltransferase that performs automethylation. No other methyl-accepting substrate has been identified yet. Component of the velvet transcription factor complex that acts as a global regulator for secondary metabolite gene expression. Required for aflR expression and subsequent aflatoxin production. Negatively regulates veA expression. Controls conidiophore and conidial development. Required for hydrophobin production which plays a role in cell surface hydrophobicity and host defense escape. This Aspergillus flavus (strain ATCC 200026 / FGSC A1120 / IAM 13836 / NRRL 3357 / JCM 12722 / SRRC 167) protein is Secondary metabolism regulator laeA.